We begin with the raw amino-acid sequence, 463 residues long: Interstitial collagenase B (463 aa).

A signal peptide spans 1–17; that stretch reads MPSLPLLLRLWAASSYS. Positions 18–96 are cleaved as a propeptide — activation peptide; that stretch reads FPVIQDGLQK…PRCGVPDVAP (79 aa). Residues 87–94 carry the Cysteine switch motif; it reads PRCGVPDV. Cys89 lines the Zn(2+) pocket. Residues 95-273 are metalloprotease; that stretch reads APYAITHNNP…PIQLTDATLD (179 aa). Asp155 contacts Ca(2+). Zn(2+) contacts are provided by His165 and Asp167. Ca(2+) is bound by residues Asp172 and Gly173. Position 180 (His180) interacts with Zn(2+). Ca(2+) contacts are provided by Gly187 and Gly189. His193 is a binding site for Zn(2+). A Ca(2+)-binding site is contributed by Asp195. His215 provides a ligand contact to Zn(2+). Glu216 is an active-site residue. Residues His219 and His225 each coordinate Zn(2+). The cysteines at positions 275 and 463 are disulfide-linked. 2 Hemopexin repeats span residues 278–321 and 322–368; these read GLTF…WPNL and PGKF…FGFP. Asp282 is a binding site for Ca(2+). N-linked (GlcNAc...) asparagine glycosylation is present at Asn370. Hemopexin repeat units follow at residues 371 to 419 and 420 to 463; these read VTNI…FPGI and DYKV…WFNC. The Ca(2+) site is built by Asp375 and Asp424.

The protein belongs to the peptidase M10A family. It depends on Ca(2+) as a cofactor. The cofactor is Zn(2+).

It is found in the secreted. Its subcellular location is the extracellular space. The protein resides in the extracellular matrix. It catalyses the reaction Cleavage of the triple helix of collagen at about three-quarters of the length of the molecule from the N-terminus, at 775-Gly-|-Ile-776 in the alpha1(I) chain. Cleaves synthetic substrates and alpha-macroglobulins at bonds where P1' is a hydrophobic residue.. With respect to regulation, can be activated without removal of the activation peptide. The protein is Interstitial collagenase B (Mmp1b) of Mus musculus (Mouse).